The chain runs to 940 residues: Coatomer subunit beta (940 aa).

4 HEAT repeats span residues 11-48, 90-125, 126-162, and 310-347; these read FLEAPSVDALKTSLESKNDYVKISAMKTILRVVINGDS, QEMILACNSFRNDLQHPNEFIRGATLRFLCKLKEPE, LLDPLIPTVRQCLEHRHAYVRKNAILAVFSIYQVSNH, and SILEDLITDVIPFLSSSDFDVCEKAISIIMGLVSSRNV.

In terms of assembly, oligomeric complex that consists of at least the alpha, beta, beta', gamma, delta, epsilon and zeta subunits.

The protein resides in the cytoplasm. Its subcellular location is the golgi apparatus membrane. It localises to the cytoplasmic vesicle. The protein localises to the COPI-coated vesicle membrane. In terms of biological role, the coatomer is a cytosolic protein complex that binds to dilysine motifs and reversibly associates with Golgi non-clathrin-coated vesicles, which further mediate biosynthetic protein transport from the ER, via the Golgi up to the trans Golgi network. Coatomer complex is required for budding from Golgi membranes, and is essential for the retrograde Golgi-to-ER transport of dilysine-tagged proteins. The sequence is that of Coatomer subunit beta (sec26) from Schizosaccharomyces pombe (strain 972 / ATCC 24843) (Fission yeast).